A 56-amino-acid polypeptide reads, in one-letter code: Small ribosomal subunit protein uS14B (56 aa).

Zn(2+)-binding residues include C21 and C24. Phosphoserine is present on S25. The Zn(2+) site is built by C39 and C42.

It belongs to the universal ribosomal protein uS14 family. In terms of assembly, component of the small ribosomal subunit (SSU). Mature yeast ribosomes consist of a small (40S) and a large (60S) subunit. The 40S small subunit contains 1 molecule of ribosomal RNA (18S rRNA) and 33 different proteins (encoded by 57 genes). The large 60S subunit contains 3 rRNA molecules (25S, 5.8S and 5S rRNA) and 46 different proteins (encoded by 81 genes). Zn(2+) serves as cofactor.

Its subcellular location is the cytoplasm. Functionally, component of the ribosome, a large ribonucleoprotein complex responsible for the synthesis of proteins in the cell. The small ribosomal subunit (SSU) binds messenger RNAs (mRNAs) and translates the encoded message by selecting cognate aminoacyl-transfer RNA (tRNA) molecules. The large subunit (LSU) contains the ribosomal catalytic site termed the peptidyl transferase center (PTC), which catalyzes the formation of peptide bonds, thereby polymerizing the amino acids delivered by tRNAs into a polypeptide chain. The nascent polypeptides leave the ribosome through a tunnel in the LSU and interact with protein factors that function in enzymatic processing, targeting, and the membrane insertion of nascent chains at the exit of the ribosomal tunnel. The chain is Small ribosomal subunit protein uS14B from Saccharomyces cerevisiae (strain ATCC 204508 / S288c) (Baker's yeast).